Reading from the N-terminus, the 699-residue chain is Zinc finger protein 782 (699 aa).

Residues 8-79 (VSFQDVTVEF…EKEKGFLSRN (72 aa)) form the KRAB domain. The disordered stretch occupies residues 75 to 95 (FLSRNSPEDSQPDEISEKSPE). The C2H2-type 1; degenerate zinc finger occupies 279–307 (CFCRITHKTLTGGKSFSQKSHIREHHRVH). The C2H2-type 2; degenerate zinc finger occupies 316-332 (GKSFNRNSTLPVHQRTH). A C2H2-type 3; degenerate zinc finger spans residues 337-360 (YSDYHPCTETFSYQSTFSVHQKVH). Residues 366-388 (YEYNECGKSCSMNSHLIWPQKSH) form a C2H2-type 4; degenerate zinc finger. 11 consecutive C2H2-type zinc fingers follow at residues 394-416 (YECP…QRTH), 422-444 (YKCD…QRTH), 450-472 (FECH…QRTH), 478-500 (FECN…RRTH), 506-528 (YKCD…HRTH), 534-556 (YKCN…HRIH), 562-584 (YKCN…HRTH), 590-612 (YQCE…QRTH), 618-640 (YECN…QRTH), 646-668 (YNCN…QRTH), and 674-696 (YKCD…QKAH).

Belongs to the krueppel C2H2-type zinc-finger protein family.

The protein resides in the nucleus. Its function is as follows. May be involved in transcriptional regulation. The polypeptide is Zinc finger protein 782 (ZNF782) (Homo sapiens (Human)).